A 145-amino-acid chain; its full sequence is Secreted RxLR effector protein PSE1 (145 aa).

A signal peptide spans 1–21; it reads MRLSSFIVVGAAVVNLLTSGS. Positions 53–73 match the RxLR-dEER motif; sequence RLLRYHSNNNRGGDEDIAEER.

It belongs to the RxLR effector family.

It localises to the secreted. Its subcellular location is the host cell. Secreted effector that impairs both plant effector-triggered immunity and pathogen-associated molecular patterns (PAMP)-triggered immunity (PTI). Suppresses plant cell death as a part of the plant defense responses. Facilitates plant infection by altering the auxin content at the roots penetration points of the of the pathogen. In Phytophthora nicotianae (Potato buckeye rot agent), this protein is Secreted RxLR effector protein PSE1.